Here is a 400-residue protein sequence, read N- to C-terminus: Ornithine aminotransferase (400 aa).

K254 is subject to N6-(pyridoxal phosphate)lysine.

Belongs to the class-III pyridoxal-phosphate-dependent aminotransferase family. OAT subfamily. Requires pyridoxal 5'-phosphate as cofactor.

The protein localises to the cytoplasm. The catalysed reaction is a 2-oxocarboxylate + L-ornithine = L-glutamate 5-semialdehyde + an L-alpha-amino acid. It functions in the pathway amino-acid biosynthesis; L-proline biosynthesis; L-glutamate 5-semialdehyde from L-ornithine: step 1/1. In terms of biological role, catalyzes the interconversion of ornithine to glutamate semialdehyde. In Exiguobacterium sp. (strain ATCC BAA-1283 / AT1b), this protein is Ornithine aminotransferase.